The chain runs to 117 residues: Immunoglobulin kappa variable 1-33 (117 aa).

Positions 1–22 are cleaved as a signal peptide; sequence MDMRVPAQLLGLLLLWLSGARC. The segment at 23–45 is framework-1; it reads DIQMTQSPSSLSASVGDRVTITC. One can recognise an Ig-like domain in the interval 24-117; sequence IQMTQSPSSL…YYCQQYDNLP (94 aa). Residues Cys-45 and Cys-110 are joined by a disulfide bond. Residues 46–56 form a complementarity-determining-1 region; sequence QASQDISNYLN. The tract at residues 57-71 is framework-2; sequence WYQQKPGKAPKLLIY. Positions 72–78 are complementarity-determining-2; it reads DASNLET. Positions 79–110 are framework-3; that stretch reads GVPSRFSGSGSGTDFTFTISSLQPEDIATYYC. A complementarity-determining-3 region spans residues 111–117; the sequence is QQYDNLP.

In terms of assembly, immunoglobulins are composed of two identical heavy chains and two identical light chains; disulfide-linked.

It localises to the secreted. Its subcellular location is the cell membrane. V region of the variable domain of immunoglobulin light chains that participates in the antigen recognition. Immunoglobulins, also known as antibodies, are membrane-bound or secreted glycoproteins produced by B lymphocytes. In the recognition phase of humoral immunity, the membrane-bound immunoglobulins serve as receptors which, upon binding of a specific antigen, trigger the clonal expansion and differentiation of B lymphocytes into immunoglobulins-secreting plasma cells. Secreted immunoglobulins mediate the effector phase of humoral immunity, which results in the elimination of bound antigens. The antigen binding site is formed by the variable domain of one heavy chain, together with that of its associated light chain. Thus, each immunoglobulin has two antigen binding sites with remarkable affinity for a particular antigen. The variable domains are assembled by a process called V-(D)-J rearrangement and can then be subjected to somatic hypermutations which, after exposure to antigen and selection, allow affinity maturation for a particular antigen. The chain is Immunoglobulin kappa variable 1-33 from Homo sapiens (Human).